Here is a 310-residue protein sequence, read N- to C-terminus: MTKEQAPRASGEKEEGCPPEYIVFDEERGEYICTLTGEVVEETVIDTGPEWRAYTPEERTRRSRVGSPLTHTLPDYGILTTISGYRDANGRKLEARLRIEASRLRRLQAKLRATTSIEKNIEQAAREITRLVEALNLPRGIIDTAMMIYRQAAEKGLVRGRSLESMAAAAVYAACRIRGIPRSIDDIAEVVKGGRKEVARCYRLIVRELKLRMPIVDPVRYVSRIVSALRLSPAVERRAAEILVQARKMGLTAGKDPAGLAAAAIYIAALELGERRTQKEIAAAAGVTEVTVRNRYKELVQKLNIPLPAQ.

A run of 2 repeats spans residues 126–209 and 220–301.

This sequence belongs to the TFIIB family.

Its function is as follows. Stabilizes TBP binding to an archaeal box-A promoter. Also responsible for recruiting RNA polymerase II to the pre-initiation complex (DNA-TBP-TFIIB). The sequence is that of Transcription initiation factor IIB from Pyrodictium occultum.